The chain runs to 972 residues: Protein NRDE2 homolog (972 aa).

The span at 1-17 shows a compositional bias: polar residues; the sequence is MPSNHNTSVPKFSSFNS. The interval 1–61 is disordered; the sequence is MPSNHNTSVP…RSIQSNFAVD (61 aa). Residues 19–33 show a composition bias toward basic residues; sequence KAKKNPITKSNKKYR. Polar residues predominate over residues 37-59; that stretch reads DQVSSNHAKSSFPSHRSIQSNFA. 7 HAT repeats span residues 159–191, 250–282, 318–350, 355–386, 608–640, 788–820, and 860–894; these read LNIL…YQER, WSKE…YFTG, TDVT…YELA, QANM…FWNS, EEKP…LEHL, YNLP…FESK, and TNSQ…ILNL. Position 970 is a phosphoserine (Ser-970).

This sequence belongs to the NRDE2 family.

The protein localises to the nucleus. This chain is Protein NRDE2 homolog, found in Schizosaccharomyces pombe (strain 972 / ATCC 24843) (Fission yeast).